Here is a 1009-residue protein sequence, read N- to C-terminus: DNA polymerase catalytic subunit (1009 aa).

The protein belongs to the DNA polymerase type-B family.

It is found in the host nucleus. The enzyme catalyses DNA(n) + a 2'-deoxyribonucleoside 5'-triphosphate = DNA(n+1) + diphosphate. The protein is DNA polymerase catalytic subunit (9) of Saimiri sciureus (Common squirrel monkey).